The primary structure comprises 163 residues: NADH-quinone oxidoreductase subunit J (163 aa).

The next 5 helical transmembrane spans lie at 1 to 21 (MEFV…LVII), 30 to 50 (LYLI…GAFF), 54 to 74 (LEVV…IMML), 94 to 114 (IGPS…IFFV), and 138 to 158 (LLLV…VFHI).

It belongs to the complex I subunit 6 family. As to quaternary structure, composed of 13 different subunits. Subunits NuoA, H, J, K, L, M, N constitute the membrane sector of the complex.

It localises to the cell membrane. The enzyme catalyses a quinone + NADH + 5 H(+)(in) = a quinol + NAD(+) + 4 H(+)(out). In terms of biological role, NDH-1 shuttles electrons from NADH, via FMN and iron-sulfur (Fe-S) centers, to quinones in the respiratory chain. Couples the redox reaction to proton translocation (for every two electrons transferred, four hydrogen ions are translocated across the cytoplasmic membrane), and thus conserves the redox energy in a proton gradient. In Buchnera aphidicola subsp. Schizaphis graminum (strain Sg), this protein is NADH-quinone oxidoreductase subunit J (nuoJ).